We begin with the raw amino-acid sequence, 509 residues long: Heat shock 70 kDa protein 14 (509 aa).

It belongs to the heat shock protein 70 family. Component of ribosome-associated complex (RAC), a heterodimer composed of Hsp70/DnaK-type chaperone HSPA14 and Hsp40/DnaJ-type chaperone DNAJC2.

Its subcellular location is the cytoplasm. The protein resides in the cytosol. Component of the ribosome-associated complex (RAC), a complex involved in folding or maintaining nascent polypeptides in a folding-competent state. In the RAC complex, binds to the nascent polypeptide chain, while DNAJC2 stimulates its ATPase activity. The chain is Heat shock 70 kDa protein 14 (HSPA14) from Homo sapiens (Human).